The primary structure comprises 312 residues: Elongation factor Ts, mitochondrial (312 aa).

The protein belongs to the EF-Ts family.

It is found in the mitochondrion. In terms of biological role, associates with the EF-Tu.GDP complex and induces the exchange of GDP to GTP. It remains bound to the aminoacyl-tRNA.EF-Tu.GTP complex up to the GTP hydrolysis stage on the ribosome. In Xenopus laevis (African clawed frog), this protein is Elongation factor Ts, mitochondrial (tsfm).